The sequence spans 205 residues: Protein GrpE (205 aa).

Belongs to the GrpE family. In terms of assembly, homodimer.

The protein resides in the cytoplasm. Participates actively in the response to hyperosmotic and heat shock by preventing the aggregation of stress-denatured proteins, in association with DnaK and GrpE. It is the nucleotide exchange factor for DnaK and may function as a thermosensor. Unfolded proteins bind initially to DnaJ; upon interaction with the DnaJ-bound protein, DnaK hydrolyzes its bound ATP, resulting in the formation of a stable complex. GrpE releases ADP from DnaK; ATP binding to DnaK triggers the release of the substrate protein, thus completing the reaction cycle. Several rounds of ATP-dependent interactions between DnaJ, DnaK and GrpE are required for fully efficient folding. This chain is Protein GrpE, found in Shewanella loihica (strain ATCC BAA-1088 / PV-4).